The chain runs to 211 residues: Small ribosomal subunit protein uS3 (211 aa).

Residues 39–107 (VTKYVESSFA…VPSLNVVEVK (69 aa)) enclose the KH type-2 domain.

Belongs to the universal ribosomal protein uS3 family. As to quaternary structure, part of the 30S ribosomal subunit. Forms a tight complex with proteins S10 and S14.

Binds the lower part of the 30S subunit head. Binds mRNA in the 70S ribosome, positioning it for translation. In Neorickettsia sennetsu (strain ATCC VR-367 / Miyayama) (Ehrlichia sennetsu), this protein is Small ribosomal subunit protein uS3.